A 77-amino-acid polypeptide reads, in one-letter code: U8-lycotoxin-Ls1p (77 aa).

The first 20 residues, 1 to 20, serve as a signal peptide directing secretion; that stretch reads MKLMIFTGLVLFAIVSLIEA. The propeptide occupies 21–26; sequence QAENEK.

The protein belongs to the neurotoxin 19 (CSTX) family. 08 (U8-Lctx) subfamily. In terms of processing, contains 4 disulfide bonds. As to expression, expressed by the venom gland.

The protein localises to the secreted. The chain is U8-lycotoxin-Ls1p from Lycosa singoriensis (Wolf spider).